The sequence spans 138 residues: MRFSAATVSALAMALTVAAAPGNTAKEALAKRTDDLTVADAQNICGKDLSVNCCNQVDASTNNNDNSGSGILSGILGGVLGNGGLKLTDGCSSIGVGIANDLLNSQCKQSVACCKTDGNTASGLVAVQLPCIPISGLL.

A signal peptide spans 1–19 (MRFSAATVSALAMALTVAA). Intrachain disulfides connect cysteine 45/cysteine 113, cysteine 53/cysteine 107, cysteine 54/cysteine 91, and cysteine 114/cysteine 131.

The protein belongs to the fungal hydrophobin family. In terms of assembly, interacts with the lipid droplet coating protein Cap20.

It localises to the secreted. The protein localises to the lipid droplet. In terms of biological role, aerial growth, conidiation, and dispersal of filamentous fungi in the environment rely upon a capability of their secreting small amphipathic proteins called hydrophobins (HPBs) with low sequence identity. Class I can self-assemble into an outermost layer of rodlet bundles on aerial cell surfaces, conferring cellular hydrophobicity that supports fungal growth, development and dispersal; whereas Class II form highly ordered films at water-air interfaces through intermolecular interactions but contribute nothing to the rodlet structure. Hydr1 is a class I hydrophobin involved in spore germination, appressorium formation, but not in the formation of the rodlet layer of conidia. Responsible for the full virulence on rubber tree leaves. The polypeptide is Class I hydrophobin 1 (Colletotrichum siamense (Anthracnose fungus)).